Consider the following 368-residue polypeptide: DNA replication and repair protein RecF (368 aa).

ATP is bound at residue 30-37; the sequence is GKNGTGKT.

The protein belongs to the RecF family.

The protein localises to the cytoplasm. The RecF protein is involved in DNA metabolism; it is required for DNA replication and normal SOS inducibility. RecF binds preferentially to single-stranded, linear DNA. It also seems to bind ATP. This is DNA replication and repair protein RecF from Chloroherpeton thalassium (strain ATCC 35110 / GB-78).